Reading from the N-terminus, the 85-residue chain is Toxin 3FTx-Lei1 (85 aa).

Residues 1–21 (MKTLLLSLVVVTFVCLDLAHT) form the signal peptide. 5 disulfides stabilise this stretch: cysteine 24-cysteine 45, cysteine 27-cysteine 32, cysteine 38-cysteine 63, cysteine 67-cysteine 78, and cysteine 79-cysteine 84.

The protein belongs to the three-finger toxin family. Ancestral subfamily. In terms of tissue distribution, expressed by the venom gland.

The protein resides in the secreted. In Leioheterodon madagascariensis (Malagasy giant hognose snake), this protein is Toxin 3FTx-Lei1.